The sequence spans 145 residues: D-aminoacyl-tRNA deacylase (145 aa).

Residues 137 to 138 carry the Gly-cisPro motif, important for rejection of L-amino acids motif; sequence GP.

This sequence belongs to the DTD family. Homodimer.

It localises to the cytoplasm. It carries out the reaction glycyl-tRNA(Ala) + H2O = tRNA(Ala) + glycine + H(+). The catalysed reaction is a D-aminoacyl-tRNA + H2O = a tRNA + a D-alpha-amino acid + H(+). In terms of biological role, an aminoacyl-tRNA editing enzyme that deacylates mischarged D-aminoacyl-tRNAs. Also deacylates mischarged glycyl-tRNA(Ala), protecting cells against glycine mischarging by AlaRS. Acts via tRNA-based rather than protein-based catalysis; rejects L-amino acids rather than detecting D-amino acids in the active site. By recycling D-aminoacyl-tRNA to D-amino acids and free tRNA molecules, this enzyme counteracts the toxicity associated with the formation of D-aminoacyl-tRNA entities in vivo and helps enforce protein L-homochirality. This chain is D-aminoacyl-tRNA deacylase, found in Shewanella denitrificans (strain OS217 / ATCC BAA-1090 / DSM 15013).